Reading from the N-terminus, the 600-residue chain is MSMRTEYCGLVTEHLLGQTVSLCGWVQRRRDHGGVIFIDLRDREGLVQVVCDPDRAEMFATAEGVRNEFCVQIKGLVRNRPEGTVNAGLKSGKIEVLCHELNVLNASVTPPFQLDDDNLSETTRLTHRVLDLRRPQMQHNLRLRYRVAIEARKYLDEQGFIDIETPMLTKSTPEGARDYLVPSRTNAGQFFALPQSPQLFKQLLMVANFDRYYQITKCFRDEDLRADRQPEFTQIDCETSFLGEQEIRDLFEDMIRHIFKTTIDVELDATFPVMPYSEAMARFGSDKPDLRVQLEFTELTDAMKDVDFKVFSTPANAKDGRVAALRVPKGSELSRGDIDGYTEFVRIYGAKGLAWIKVNEKAKGRDGLQSPIVKNLHDASIAAILERTGAEDGDIIFFAADRAKVVNDSLGALRLKIGHSEFGKANGLVHAGWKPLWVVDFPMFEYDDEDARYVAAHHPFTSPKDEHLEYLETDPGRCLAKAYDMVLNGWEIGGGSVRIHREEVQSKVFRALKIGAEEAQLKFGFLLDALQYGAPPHGGIAFGLDRIVTMMAGADSIRDVIAFPKTQRAQDLLTQAPSPVDERQLRELHIRLRQPEQPKA.

Glu174 is a binding site for L-aspartate. An aspartate region spans residues Gln198–Lys201. Arg220 contributes to the L-aspartate binding site. ATP-binding positions include Arg220–Glu222 and Gln229. His457 serves as a coordination point for L-aspartate. Glu491 contributes to the ATP binding site. Arg498 contacts L-aspartate. Gly543–Arg546 is a binding site for ATP.

The protein belongs to the class-II aminoacyl-tRNA synthetase family. Type 1 subfamily. Homodimer.

The protein resides in the cytoplasm. The enzyme catalyses tRNA(Asx) + L-aspartate + ATP = L-aspartyl-tRNA(Asx) + AMP + diphosphate. Its function is as follows. Aspartyl-tRNA synthetase with relaxed tRNA specificity since it is able to aspartylate not only its cognate tRNA(Asp) but also tRNA(Asn). Reaction proceeds in two steps: L-aspartate is first activated by ATP to form Asp-AMP and then transferred to the acceptor end of tRNA(Asp/Asn). The polypeptide is Aspartate--tRNA(Asp/Asn) ligase (Burkholderia lata (strain ATCC 17760 / DSM 23089 / LMG 22485 / NCIMB 9086 / R18194 / 383)).